Here is a 665-residue protein sequence, read N- to C-terminus: Transketolase (665 aa).

Histidine 26 is a substrate binding site. Residues histidine 66 and 114-116 (GPL) contribute to the thiamine diphosphate site. Aspartate 155 is a Mg(2+) binding site. Positions 156 and 185 each coordinate thiamine diphosphate. Asparagine 185 and isoleucine 187 together coordinate Mg(2+). 3 residues coordinate substrate: histidine 261, arginine 358, and serine 385. Histidine 261 is a binding site for thiamine diphosphate. Residue glutamate 411 is the Proton donor of the active site. Position 437 (phenylalanine 437) interacts with thiamine diphosphate. Substrate contacts are provided by histidine 461, aspartate 469, and arginine 520.

Belongs to the transketolase family. In terms of assembly, homodimer. Mg(2+) serves as cofactor. Ca(2+) is required as a cofactor. The cofactor is Mn(2+). Requires Co(2+) as cofactor. It depends on thiamine diphosphate as a cofactor.

It catalyses the reaction D-sedoheptulose 7-phosphate + D-glyceraldehyde 3-phosphate = aldehydo-D-ribose 5-phosphate + D-xylulose 5-phosphate. Functionally, catalyzes the transfer of a two-carbon ketol group from a ketose donor to an aldose acceptor, via a covalent intermediate with the cofactor thiamine pyrophosphate. The protein is Transketolase (tkt) of Buchnera aphidicola subsp. Schizaphis graminum (strain Sg).